A 328-amino-acid polypeptide reads, in one-letter code: Methionyl-tRNA formyltransferase (328 aa).

Ser-110–Pro-113 is a binding site for (6S)-5,6,7,8-tetrahydrofolate.

Belongs to the Fmt family.

The catalysed reaction is L-methionyl-tRNA(fMet) + (6R)-10-formyltetrahydrofolate = N-formyl-L-methionyl-tRNA(fMet) + (6S)-5,6,7,8-tetrahydrofolate + H(+). Functionally, attaches a formyl group to the free amino group of methionyl-tRNA(fMet). The formyl group appears to play a dual role in the initiator identity of N-formylmethionyl-tRNA by promoting its recognition by IF2 and preventing the misappropriation of this tRNA by the elongation apparatus. This chain is Methionyl-tRNA formyltransferase, found in Prochlorococcus marinus (strain MIT 9515).